The chain runs to 505 residues: ATP synthase subunit alpha (505 aa).

171 to 178 (GDRQTGKT) lines the ATP pocket.

The protein belongs to the ATPase alpha/beta chains family. As to quaternary structure, F-type ATPases have 2 components, CF(1) - the catalytic core - and CF(0) - the membrane proton channel. CF(1) has five subunits: alpha(3), beta(3), gamma(1), delta(1), epsilon(1). CF(0) has three main subunits: a(1), b(2) and c(9-12). The alpha and beta chains form an alternating ring which encloses part of the gamma chain. CF(1) is attached to CF(0) by a central stalk formed by the gamma and epsilon chains, while a peripheral stalk is formed by the delta and b chains.

Its subcellular location is the cell inner membrane. The catalysed reaction is ATP + H2O + 4 H(+)(in) = ADP + phosphate + 5 H(+)(out). Produces ATP from ADP in the presence of a proton gradient across the membrane. The alpha chain is a regulatory subunit. This Campylobacter concisus (strain 13826) protein is ATP synthase subunit alpha.